A 334-amino-acid chain; its full sequence is 3-ketodihydrosphingosine reductase (334 aa).

Residues 1 to 20 (MIIYILFSLLAAVIVHLVYK) form the signal peptide. NADPH contacts are provided by G36, S38, S39, G40, R62, K66, D100, and I101. The short motif at 36–40 (GGSSG) is the GXSXG element. The active-site Proton donor is S182. Y196 (proton acceptor) is an active-site residue. NADP(+) contacts are provided by Y196 and K200. K200 serves as the catalytic Lowers pKa of active site Tyr.

This sequence belongs to the short-chain dehydrogenases/reductases (SDR) family.

The protein localises to the endoplasmic reticulum. The catalysed reaction is sphinganine + NADP(+) = 3-oxosphinganine + NADPH + H(+). Its pathway is lipid metabolism; sphingolipid metabolism. In terms of biological role, catalyzes the reduction of 3'-oxosphinganine (3-ketodihydrosphingosine/KDS) to sphinganine (dihydrosphingosine/DHS), the second step of de novo sphingolipid biosynthesis. The polypeptide is 3-ketodihydrosphingosine reductase (ksrA-1) (Dictyostelium discoideum (Social amoeba)).